The primary structure comprises 309 residues: HPr kinase/phosphorylase (309 aa).

Catalysis depends on residues His138 and Lys159. ATP is bound at residue 153 to 160 (GQSGVGKS). Ser160 lines the Mg(2+) pocket. The Proton acceptor; for phosphorylation activity. Proton donor; for dephosphorylation activity role is filled by Asp177. Residues 201 to 210 (LEIRGLGIIN) form an important for the catalytic mechanism of both phosphorylation and dephosphorylation region. Glu202 serves as a coordination point for Mg(2+). The active site involves Arg243. Positions 264–269 (PVRPGR) are important for the catalytic mechanism of dephosphorylation.

This sequence belongs to the HPrK/P family. Homohexamer. Requires Mg(2+) as cofactor.

The enzyme catalyses [HPr protein]-L-serine + ATP = [HPr protein]-O-phospho-L-serine + ADP + H(+). The catalysed reaction is [HPr protein]-O-phospho-L-serine + phosphate + H(+) = [HPr protein]-L-serine + diphosphate. In terms of biological role, catalyzes the ATP- as well as the pyrophosphate-dependent phosphorylation of a specific serine residue in HPr, a phosphocarrier protein of the phosphoenolpyruvate-dependent sugar phosphotransferase system (PTS). HprK/P also catalyzes the pyrophosphate-producing, inorganic phosphate-dependent dephosphorylation (phosphorolysis) of seryl-phosphorylated HPr (P-Ser-HPr). The two antagonistic activities of HprK/P are regulated by several intracellular metabolites, which change their concentration in response to the absence or presence of rapidly metabolisable carbon sources (glucose, fructose, etc.) in the growth medium. Also phosphorylates/dephosphorylates the HPr-like catabolite repression protein crh on a specific serine residue. Therefore, by controlling the phosphorylation state of HPr and crh, HPrK/P is a sensor enzyme that plays a major role in the regulation of carbon metabolism and sugar transport: it mediates carbon catabolite repression (CCR), and regulates PTS-catalyzed carbohydrate uptake and inducer exclusion. This chain is HPr kinase/phosphorylase, found in Bacillus cereus (strain B4264).